The sequence spans 204 residues: Large ribosomal subunit protein eL15y (204 aa).

Belongs to the eukaryotic ribosomal protein eL15 family.

This Picea mariana (Black spruce) protein is Large ribosomal subunit protein eL15y (SB62).